Reading from the N-terminus, the 307-residue chain is UDP-3-O-acyl-N-acetylglucosamine deacetylase (307 aa).

Residues histidine 78, histidine 241, and aspartate 245 each coordinate Zn(2+). Residue histidine 268 is the Proton donor of the active site.

It belongs to the LpxC family. It depends on Zn(2+) as a cofactor.

It catalyses the reaction a UDP-3-O-[(3R)-3-hydroxyacyl]-N-acetyl-alpha-D-glucosamine + H2O = a UDP-3-O-[(3R)-3-hydroxyacyl]-alpha-D-glucosamine + acetate. The protein operates within glycolipid biosynthesis; lipid IV(A) biosynthesis; lipid IV(A) from (3R)-3-hydroxytetradecanoyl-[acyl-carrier-protein] and UDP-N-acetyl-alpha-D-glucosamine: step 2/6. Catalyzes the hydrolysis of UDP-3-O-myristoyl-N-acetylglucosamine to form UDP-3-O-myristoylglucosamine and acetate, the committed step in lipid A biosynthesis. The protein is UDP-3-O-acyl-N-acetylglucosamine deacetylase of Paracidovorax citrulli (strain AAC00-1) (Acidovorax citrulli).